The primary structure comprises 217 residues: N-(5'-phosphoribosyl)anthranilate isomerase (217 aa).

Belongs to the TrpF family.

The enzyme catalyses N-(5-phospho-beta-D-ribosyl)anthranilate = 1-(2-carboxyphenylamino)-1-deoxy-D-ribulose 5-phosphate. Its pathway is amino-acid biosynthesis; L-tryptophan biosynthesis; L-tryptophan from chorismate: step 3/5. This chain is N-(5'-phosphoribosyl)anthranilate isomerase, found in Bacillus velezensis (strain DSM 23117 / BGSC 10A6 / LMG 26770 / FZB42) (Bacillus amyloliquefaciens subsp. plantarum).